The chain runs to 362 residues: MAQVFNFSSGPAMLPTEVLKLAQQELRDWHDLGTSVMEISHRGKEFIQVAEEAEQDFRDLLSIPSNYKVLFCHGGGRGQFAGVPLNLLGDRTTADYVDAGYWAASAIKEAKKYCAPQIIDAKITVDGKRAVKPMREWQLSDNAAYLHYCPNETIDGIAIDETPDFGPGVVVTADFSSTILSAPLDVSRYGVIYAGAQKNIGPAGLTLVIVREDLLGKAHENCPSILDYTVLNDNDSMFNTPPTFAWYLSGLVFKWLKAQGGVAAMHKINQQKAQLLYGVIDNSDFYRNDVAQANRSRMNVPFQLADNALDKVFLEESFAAGLHALKGHRVVGGMRASIYNAMPIEGVKALTDFMIDFERRHG.

Positions 9 and 42 each coordinate L-glutamate. Residues 76–77, Trp-102, Thr-153, Asp-174, and Gln-197 each bind pyridoxal 5'-phosphate; that span reads GR. The residue at position 198 (Lys-198) is an N6-(pyridoxal phosphate)lysine. 239-240 is a binding site for pyridoxal 5'-phosphate; the sequence is NT.

This sequence belongs to the class-V pyridoxal-phosphate-dependent aminotransferase family. SerC subfamily. In terms of assembly, homodimer. The cofactor is pyridoxal 5'-phosphate.

It localises to the cytoplasm. It catalyses the reaction O-phospho-L-serine + 2-oxoglutarate = 3-phosphooxypyruvate + L-glutamate. The catalysed reaction is 4-(phosphooxy)-L-threonine + 2-oxoglutarate = (R)-3-hydroxy-2-oxo-4-phosphooxybutanoate + L-glutamate. The protein operates within amino-acid biosynthesis; L-serine biosynthesis; L-serine from 3-phospho-D-glycerate: step 2/3. It participates in cofactor biosynthesis; pyridoxine 5'-phosphate biosynthesis; pyridoxine 5'-phosphate from D-erythrose 4-phosphate: step 3/5. Catalyzes the reversible conversion of 3-phosphohydroxypyruvate to phosphoserine and of 3-hydroxy-2-oxo-4-phosphonooxybutanoate to phosphohydroxythreonine. The sequence is that of Phosphoserine aminotransferase from Salmonella arizonae (strain ATCC BAA-731 / CDC346-86 / RSK2980).